A 237-amino-acid polypeptide reads, in one-letter code: UPF0280 protein Mbur_0309 (237 aa).

This sequence belongs to the UPF0280 family.

This Methanococcoides burtonii (strain DSM 6242 / NBRC 107633 / OCM 468 / ACE-M) protein is UPF0280 protein Mbur_0309.